The primary structure comprises 302 residues: Protoheme IX farnesyltransferase (302 aa).

The next 9 membrane-spanning stretches (helical) occupy residues 27–47 (VVAL…PGMV), 53–73 (LFGL…NHVI), 100–120 (LVFA…AVNV), 121–141 (LTAV…TVFL), 149–169 (IVWG…AVTG), 175–195 (PLLL…ALAI), 215–235 (VAFT…VSLV), 237–257 (FIIH…GIGF), and 273–293 (AMPT…LLLV).

Belongs to the UbiA prenyltransferase family. Protoheme IX farnesyltransferase subfamily.

It localises to the cell inner membrane. It catalyses the reaction heme b + (2E,6E)-farnesyl diphosphate + H2O = Fe(II)-heme o + diphosphate. It participates in porphyrin-containing compound metabolism; heme O biosynthesis; heme O from protoheme: step 1/1. Functionally, converts heme B (protoheme IX) to heme O by substitution of the vinyl group on carbon 2 of heme B porphyrin ring with a hydroxyethyl farnesyl side group. In Thioalkalivibrio sulfidiphilus (strain HL-EbGR7), this protein is Protoheme IX farnesyltransferase.